Reading from the N-terminus, the 211-residue chain is Uridine kinase (211 aa).

13 to 20 (GGTASGKT) contributes to the ATP binding site.

Belongs to the uridine kinase family.

It is found in the cytoplasm. It carries out the reaction uridine + ATP = UMP + ADP + H(+). It catalyses the reaction cytidine + ATP = CMP + ADP + H(+). Its pathway is pyrimidine metabolism; CTP biosynthesis via salvage pathway; CTP from cytidine: step 1/3. The protein operates within pyrimidine metabolism; UMP biosynthesis via salvage pathway; UMP from uridine: step 1/1. This chain is Uridine kinase, found in Thermus thermophilus (strain ATCC BAA-163 / DSM 7039 / HB27).